Reading from the N-terminus, the 923-residue chain is Hexokinase-3 (923 aa).

Polar residues predominate over residues 1–18 (MDSIGSSGLRQGEETLSC). A disordered region spans residues 1-30 (MDSIGSSGLRQGEETLSCSEEGLPGPSDSS). Hexokinase domains are found at residues 27 to 471 (SDSS…MVTA) and 477 to 912 (AAHR…LVTA). The segment at 84-220 (HGTEQGDFVV…AYNIDVVAVV (137 aa)) is hexokinase small subdomain 1. 95-102 (ELGATGAS) is an ATP binding site. Position 95–104 (95–104 (ELGATGASLR)) interacts with D-glucose 6-phosphate. D-glucose contacts are provided by residues serine 168, 185–186 (TK), and 221–222 (ND). The interval 221–460 (NDTVGTMMGC…CDVSLIPSVD (240 aa)) is hexokinase large subdomain 1. D-glucose 6-phosphate contacts are provided by aspartate 222 and threonine 245. Residues asparagine 248, glutamate 273, and 304-307 (QRFE) contribute to the D-glucose site. A D-glucose 6-phosphate-binding site is contributed by 426 to 428 (GGR). Residues 438-439 (SV) and 542-547 (DLGGTN) each bind ATP. Residues 531 to 661 (DGSERGDFLA…AVELNVVAIV (131 aa)) form a hexokinase small subdomain 2 region. Position 542 to 546 (542 to 546 (DLGGT)) interacts with D-glucose 6-phosphate. D-glucose contacts are provided by residues 609–610 (SF), 626–627 (TK), and 662–663 (ND). The segment at 662–901 (NDTVGTMMSC…CVVTFLQSED (240 aa)) is hexokinase large subdomain 2. Aspartate 663 and threonine 686 together coordinate D-glucose 6-phosphate. Threonine 686 is a binding site for ATP. Residues 688 to 689 (TN), glutamate 714, and glutamate 748 contribute to the D-glucose site. Residues 753 to 754 (GM), 790 to 794 (TKFLS), and 869 to 873 (TLYKL) contribute to the ATP site. D-glucose 6-phosphate is bound by residues 867 to 869 (DGT) and serine 903.

The protein belongs to the hexokinase family.

The enzyme catalyses a D-hexose + ATP = a D-hexose 6-phosphate + ADP + H(+). It carries out the reaction D-fructose + ATP = D-fructose 6-phosphate + ADP + H(+). It catalyses the reaction D-glucose + ATP = D-glucose 6-phosphate + ADP + H(+). The protein operates within carbohydrate metabolism; hexose metabolism. It participates in carbohydrate degradation; glycolysis; D-glyceraldehyde 3-phosphate and glycerone phosphate from D-glucose: step 1/4. Its activity is regulated as follows. Hexokinase is an allosteric enzyme inhibited by its product D-glucose 6-phosphate. In terms of biological role, catalyzes the phosphorylation of hexose, such as D-glucose and D-fructose, to hexose 6-phosphate (D-glucose 6-phosphate and D-fructose 6-phosphate, respectively). Mediates the initial step of glycolysis by catalyzing phosphorylation of D-glucose to D-glucose 6-phosphate. This is Hexokinase-3 from Homo sapiens (Human).